Consider the following 310-residue polypeptide: Transcription factor RAX3 (310 aa).

2 HTH myb-type domains span residues Lys9–Leu62 and Arg63–Leu117. DNA-binding regions (H-T-H motif) lie at residues Trp38–Leu62 and Trp90–Leu113.

As to expression, ubiquitous.

The protein resides in the nucleus. In terms of biological role, transcription activator. Positively regulates axillary meristems (AMs) formation and development, especially during inflorescence. The protein is Transcription factor RAX3 (RAX3) of Arabidopsis thaliana (Mouse-ear cress).